The chain runs to 160 residues: Protein YpjC (160 aa).

This Escherichia coli (strain K12) protein is Protein YpjC (ypjC).